The chain runs to 907 residues: Alanine--tRNA ligase (907 aa).

Residues histidine 602, histidine 606, cysteine 706, and histidine 710 each coordinate Zn(2+).

Belongs to the class-II aminoacyl-tRNA synthetase family. Requires Zn(2+) as cofactor.

It is found in the cytoplasm. It catalyses the reaction tRNA(Ala) + L-alanine + ATP = L-alanyl-tRNA(Ala) + AMP + diphosphate. Its function is as follows. Catalyzes the attachment of alanine to tRNA(Ala) in a two-step reaction: alanine is first activated by ATP to form Ala-AMP and then transferred to the acceptor end of tRNA(Ala). Also edits incorrectly charged Ser-tRNA(Ala) and Gly-tRNA(Ala) via its editing domain. The protein is Alanine--tRNA ligase of Thermofilum pendens (strain DSM 2475 / Hrk 5).